The sequence spans 556 residues: PTS system fructose-specific EIIB'BC component (556 aa).

PTS EIIB type-2 domains lie at 1 to 85 and 106 to 201; these read MKLF…LANG and IVAV…KAFK. The active-site Phosphocysteine intermediate; for EIIB activity is cysteine 112. The residue at position 112 (cysteine 112) is a Phosphocysteine; by EIIA. Residues 224 to 556 enclose the PTS EIIC type-2 domain; that stretch reads VYKHLMTGVS…AIIKSKNNAE (333 aa). 10 consecutive transmembrane segments (helical) span residues 237-257, 275-295, 302-322, 324-344, 349-369, 390-410, 431-451, 468-488, 490-510, and 529-549; these read PLVV…FNVI, SGVA…FSIA, VGLI…GGII, GFLA…PASL, PILI…IYLI, VNAI…MGGP, MAAA…ATWI, FVLG…ADPI, VIIS…GLNI, and LKYL…YAII.

It is found in the cell inner membrane. The catalysed reaction is D-fructose(out) + N(pros)-phospho-L-histidyl-[protein] = D-fructose 1-phosphate(in) + L-histidyl-[protein]. In terms of biological role, the phosphoenolpyruvate-dependent sugar phosphotransferase system (sugar PTS), a major carbohydrate active transport system, catalyzes the phosphorylation of incoming sugar substrates concomitantly with their translocation across the cell membrane. The enzyme II FruAB PTS system is involved in fructose transport. In Haemophilus influenzae (strain ATCC 51907 / DSM 11121 / KW20 / Rd), this protein is PTS system fructose-specific EIIB'BC component.